The chain runs to 520 residues: Bifunctional purine biosynthesis protein PurH (520 aa).

Residues 1 to 146 (MAPVALLSVS…KNHADVAVLT (146 aa)) form the MGS-like domain.

This sequence belongs to the PurH family.

The enzyme catalyses (6R)-10-formyltetrahydrofolate + 5-amino-1-(5-phospho-beta-D-ribosyl)imidazole-4-carboxamide = 5-formamido-1-(5-phospho-D-ribosyl)imidazole-4-carboxamide + (6S)-5,6,7,8-tetrahydrofolate. The catalysed reaction is IMP + H2O = 5-formamido-1-(5-phospho-D-ribosyl)imidazole-4-carboxamide. Its pathway is purine metabolism; IMP biosynthesis via de novo pathway; 5-formamido-1-(5-phospho-D-ribosyl)imidazole-4-carboxamide from 5-amino-1-(5-phospho-D-ribosyl)imidazole-4-carboxamide (10-formyl THF route): step 1/1. It participates in purine metabolism; IMP biosynthesis via de novo pathway; IMP from 5-formamido-1-(5-phospho-D-ribosyl)imidazole-4-carboxamide: step 1/1. The protein is Bifunctional purine biosynthesis protein PurH of Synechococcus sp. (strain CC9902).